The primary structure comprises 895 residues: Protein translocase subunit SecA (895 aa).

Residues glutamine 90, 108 to 112, and aspartate 498 each bind ATP; that span reads GEGKS.

Belongs to the SecA family.

It is found in the plastid. It localises to the chloroplast stroma. Its subcellular location is the chloroplast thylakoid membrane. It carries out the reaction ATP + H2O + cellular proteinSide 1 = ADP + phosphate + cellular proteinSide 2.. Has a central role in coupling the hydrolysis of ATP to the transfer of proteins across the thylakoid membrane. This Cyanidium caldarium (Red alga) protein is Protein translocase subunit SecA.